Consider the following 460-residue polypeptide: Cysteine--tRNA ligase (460 aa).

Residue Cys27 participates in Zn(2+) binding. Residues 29–39 (PTVYDDAHLGH) carry the 'HIGH' region motif. Zn(2+) is bound by residues Cys202, His227, and Glu231. The 'KMSKS' region motif lies at 259-263 (KMSKS). Lys262 contributes to the ATP binding site.

Belongs to the class-I aminoacyl-tRNA synthetase family. In terms of assembly, monomer. Requires Zn(2+) as cofactor.

It localises to the cytoplasm. It carries out the reaction tRNA(Cys) + L-cysteine + ATP = L-cysteinyl-tRNA(Cys) + AMP + diphosphate. The chain is Cysteine--tRNA ligase from Campylobacter lari (strain RM2100 / D67 / ATCC BAA-1060).